Reading from the N-terminus, the 444-residue chain is Glutamate dehydrogenase (444 aa).

The active site involves Lys124.

This sequence belongs to the Glu/Leu/Phe/Val dehydrogenases family. Homohexamer.

The enzyme catalyses L-glutamate + NAD(+) + H2O = 2-oxoglutarate + NH4(+) + NADH + H(+). It catalyses the reaction L-glutamate + NADP(+) + H2O = 2-oxoglutarate + NH4(+) + NADPH + H(+). This Bacteroides thetaiotaomicron (strain ATCC 29148 / DSM 2079 / JCM 5827 / CCUG 10774 / NCTC 10582 / VPI-5482 / E50) protein is Glutamate dehydrogenase (gdhA).